The primary structure comprises 126 residues: MALLSKSFKQEYSLEKRKLISSKIRNRYKDRLPIIVERAANSDVPDINKKKFLAPSNMVITNFIMEIRKHLDDSDHNEQKAIFLFVNKNNLPPSSQLLSSIYDAHKDEDGFLYICYSGENTFGSDI.

The Phosphatidylethanolamine amidated glycine moiety is linked to residue Gly-123. Positions 124 to 126 are cleaved as a propeptide — removed in mature form; sequence SDI.

This sequence belongs to the ATG8 family.

It localises to the membrane. This Dictyostelium discoideum (Social amoeba) protein is Autophagy-related protein 8-like protein DDB_G0290491.